Here is a 426-residue protein sequence, read N- to C-terminus: MRSKDKISYFYDGDVGSVYFGPNHPMKPHRLCMTHHLILAYGLHSKMEVYRPHKAYPIEMAQFHSPDYVEFLQRINPENQNLFPNEMARYNLGEDCPVFEDLFEFCQLYAGGTIDAARRLNNKLCDIAINWAGGLHHAKKCDASGFCYINDLVLGILELLKHHPRVLYIDIDVHHGDGVEEAFYFTDRVMTVSFHKFGDKFFPGTGDVKEIGEREGKFYAINVPLKDGIDDSSFNRLFRTIISKVVEIYQPGAIVLQCGADSLARDRLGCFNLSIDGHAECVKFVKKFNLPLLVTGGGGYTKENVARCWTVETGILLDTELPNEIPENDYIKYFAPDFSLKIPGGHIENLNTKSYISSIKVQILENLRYIQHAPSVQMQEVPPDFYIPDFDEDEQNPDVRADQRSRDKQIQRDDEYFDGDNDNDAS.

The segment at 6–318 (KISYFYDGDV…WTVETGILLD (313 aa)) is histone deacetylase. His137 acts as the Proton donor/acceptor in catalysis. Residues Asp172, His174, and Asp261 each contribute to the Zn(2+) site. The disordered stretch occupies residues 383–426 (PDFYIPDFDEDEQNPDVRADQRSRDKQIQRDDEYFDGDNDNDAS). A compositionally biased stretch (basic and acidic residues) spans 397–414 (PDVRADQRSRDKQIQRDD). Residues 415 to 426 (EYFDGDNDNDAS) show a composition bias toward acidic residues.

Belongs to the histone deacetylase family. HD type 1 subfamily. In terms of assembly, interacts with AHL22. Binds to farnesylated ASG2 in the cytosol. Zn(2+) is required as a cofactor.

It is found in the nucleus. The protein resides in the cytoplasm. Its subcellular location is the cytosol. The enzyme catalyses N(6)-acetyl-L-lysyl-[histone] + H2O = L-lysyl-[histone] + acetate. Its function is as follows. Responsible for the deacetylation of lysine residues on the N-terminal part of the core histones (H2A, H2B, H3 and H4). Histone deacetylation gives a tag for epigenetic repression and plays an important role in transcriptional regulation, cell cycle progression and developmental events. Histone deacetylases act via the formation of large multiprotein complexes. This Arabidopsis thaliana (Mouse-ear cress) protein is Histone deacetylase 9 (HDA9).